The sequence spans 249 residues: Electron transfer flavoprotein subunit beta (249 aa).

This sequence belongs to the ETF beta-subunit/FixA family. In terms of assembly, heterodimer of an alpha and a beta subunit. FAD is required as a cofactor. The cofactor is AMP.

Its function is as follows. The electron transfer flavoprotein serves as a specific electron acceptor for other dehydrogenases. It transfers the electrons to the main respiratory chain via ETF-ubiquinone oxidoreductase (ETF dehydrogenase). The protein is Electron transfer flavoprotein subunit beta (etfB) of Pseudomonas aeruginosa (strain ATCC 15692 / DSM 22644 / CIP 104116 / JCM 14847 / LMG 12228 / 1C / PRS 101 / PAO1).